The primary structure comprises 82 residues: MKRNNSKKVRVEPTRRPKKNPLKARGIEAVDYKDIETLRTFISERGKIRSRRVTGLTPQQQRQVATAVKNAREMALLPFTSR.

Positions M1 to P21 are disordered.

This sequence belongs to the bacterial ribosomal protein bS18 family. Part of the 30S ribosomal subunit. Forms a tight heterodimer with protein bS6.

Binds as a heterodimer with protein bS6 to the central domain of the 16S rRNA, where it helps stabilize the platform of the 30S subunit. The protein is Small ribosomal subunit protein bS18 of Corynebacterium kroppenstedtii (strain DSM 44385 / JCM 11950 / CIP 105744 / CCUG 35717).